The sequence spans 352 residues: tRNA (guanine-N(1)-)-methyltransferase (352 aa).

S-adenosyl-L-methionine contacts are provided by residues glycine 109 and 129–134 (IGDYVL).

This sequence belongs to the RNA methyltransferase TrmD family. In terms of assembly, homodimer.

It is found in the cytoplasm. The catalysed reaction is guanosine(37) in tRNA + S-adenosyl-L-methionine = N(1)-methylguanosine(37) in tRNA + S-adenosyl-L-homocysteine + H(+). Functionally, specifically methylates guanosine-37 in various tRNAs. This is tRNA (guanine-N(1)-)-methyltransferase from Chlamydia trachomatis serovar L2 (strain ATCC VR-902B / DSM 19102 / 434/Bu).